The chain runs to 405 residues: Cystathionine gamma-lyase (405 aa).

3 residues coordinate substrate: Arg-62, Tyr-114, and Arg-119. N6-(pyridoxal phosphate)lysine is present on Lys-212. Glu-339 lines the substrate pocket.

Belongs to the trans-sulfuration enzymes family. Homotetramer. Interacts with CALM in a calcium-dependent manner. The cofactor is pyridoxal 5'-phosphate.

Its subcellular location is the cytoplasm. The enzyme catalyses L,L-cystathionine + H2O = 2-oxobutanoate + L-cysteine + NH4(+). Its pathway is amino-acid biosynthesis; L-cysteine biosynthesis; L-cysteine from L-homocysteine and L-serine: step 2/2. Catalyzes the last step in the trans-sulfuration pathway from methionine to cysteine. Has broad substrate specificity. Converts cystathionine to cysteine, ammonia and 2-oxobutanoate. Converts two cysteine molecules to lanthionine and hydrogen sulfide. Can also accept homocysteine as substrate. Specificity depends on the levels of the endogenous substrates. Generates the endogenous signaling molecule hydrogen sulfide (H2S), and so contributes to the regulation of blood pressure. Acts as a cysteine-protein sulfhydrase by mediating sulfhydration of target proteins: sulfhydration consists of converting -SH groups into -SSH on specific cysteine residues of target proteins such as GAPDH, PTPN1 and NF-kappa-B subunit RELA, thereby regulating their function. The sequence is that of Cystathionine gamma-lyase (CTH) from Bos taurus (Bovine).